A 116-amino-acid chain; its full sequence is Large ribosomal subunit protein bL17 (116 aa).

Belongs to the bacterial ribosomal protein bL17 family. Part of the 50S ribosomal subunit. Contacts protein L32.

The chain is Large ribosomal subunit protein bL17 from Helicobacter acinonychis (strain Sheeba).